The chain runs to 166 residues: Deglycase PYRAB04690 (166 aa).

A PfpI endopeptidase domain is found at 1–166; it reads MRVLILSADQ…WMREFVKLLK (166 aa). Histidine 101 is an active-site residue.

This sequence belongs to the peptidase C56 family. Homohexamer formed by a dimer of trimers that assemble into a hollow ring structure.

The protein localises to the cytoplasm. The enzyme catalyses N(omega)-(1-hydroxy-2-oxopropyl)-L-arginyl-[protein] + H2O = lactate + L-arginyl-[protein] + H(+). It catalyses the reaction N(6)-(1-hydroxy-2-oxopropyl)-L-lysyl-[protein] + H2O = lactate + L-lysyl-[protein] + H(+). It carries out the reaction S-(1-hydroxy-2-oxopropyl)-L-cysteinyl-[protein] + H2O = lactate + L-cysteinyl-[protein] + H(+). The catalysed reaction is N(omega)-(1-hydroxy-2-oxoethyl)-L-arginyl-[protein] + H2O = L-arginyl-[protein] + glycolate + H(+). The enzyme catalyses N(6)-(1-hydroxy-2-oxoethyl)-L-lysyl-[protein] + H2O = glycolate + L-lysyl-[protein] + H(+). It catalyses the reaction S-(1-hydroxy-2-oxoethyl)-L-cysteinyl-[protein] + H2O = glycolate + L-cysteinyl-[protein] + H(+). Functionally, deglycase that catalyzes the deglycation of the Maillard adducts formed between amino groups of proteins and reactive carbonyl groups of glyoxals. Thus, functions as a protein deglycase that repairs methylglyoxal- and glyoxal-glycated proteins, and releases repaired proteins and lactate or glycolate, respectively. Deglycates cysteine, arginine and lysine residues in proteins, and thus reactivates these proteins by reversing glycation by glyoxals. Acts on early glycation intermediates (hemithioacetals and aminocarbinols), preventing the formation of advanced glycation endproducts (AGE) that cause irreversible damage. Also displays proteolytic activity. The chain is Deglycase PYRAB04690 from Pyrococcus abyssi (strain GE5 / Orsay).